The primary structure comprises 152 residues: Transcriptional regulator MraZ (152 aa).

2 SpoVT-AbrB domains span residues 5 to 52 (AHAI…PLCE) and 81 to 124 (ASEC…SETR).

It belongs to the MraZ family. As to quaternary structure, forms oligomers.

Its subcellular location is the cytoplasm. The protein localises to the nucleoid. This Tolumonas auensis (strain DSM 9187 / NBRC 110442 / TA 4) protein is Transcriptional regulator MraZ.